The chain runs to 251 residues: Pyrroloquinoline-quinone synthase (251 aa).

Belongs to the PqqC family.

It catalyses the reaction 6-(2-amino-2-carboxyethyl)-7,8-dioxo-1,2,3,4,7,8-hexahydroquinoline-2,4-dicarboxylate + 3 O2 = pyrroloquinoline quinone + 2 H2O2 + 2 H2O + H(+). The protein operates within cofactor biosynthesis; pyrroloquinoline quinone biosynthesis. Functionally, ring cyclization and eight-electron oxidation of 3a-(2-amino-2-carboxyethyl)-4,5-dioxo-4,5,6,7,8,9-hexahydroquinoline-7,9-dicarboxylic-acid to PQQ. In Pseudomonas putida (strain W619), this protein is Pyrroloquinoline-quinone synthase.